We begin with the raw amino-acid sequence, 402 residues long: Protein FAM53A (402 aa).

The residue at position 119 (Ser-119) is a Phosphoserine. The disordered stretch occupies residues 170-215 (LVPGLPRRPVSPAGPTSPLTPRPASASSGFVDGSEGSTSSGPPWLS). The Nuclear localization signal motif lies at 273-281 (RRVRRKRRR). A phosphoserine mark is found at Ser-306 and Ser-309. Over residues 323–333 (TLVSSPCNSQG) the composition is skewed to polar residues. The tract at residues 323–402 (TLVSSPCNSQ…DLDLEQIENN (80 aa)) is disordered. Residues 336-345 (GIITPSSSPR) are compositionally biased toward low complexity.

Belongs to the FAM53 family.

Its subcellular location is the nucleus. In terms of biological role, may play an important role in neural development; the dorsomedial roof of the third ventricle. The protein is Protein FAM53A of Mus musculus (Mouse).